A 736-amino-acid chain; its full sequence is Centrosomal protein kizuna (736 aa).

Residues 10-35 adopt a coiled-coil conformation; the sequence is HRAMKLQRNLRHCEGKRLELERELFQ. Over residues 192–208 the composition is skewed to polar residues; the sequence is NTSFQLSQKMPVTSVAS. Disordered stretches follow at residues 192–238, 279–305, 323–348, and 642–690; these read NTSF…SAQL, SFTHANPSGASPDACDYINNQTSDKHS, EDKQCLDSSSDLTVSISESEDDSYPP, and TVEE…NMST. Basic and acidic residues predominate over residues 210 to 219; that stretch reads EDGRTHRAQI. The span at 328–339 shows a compositional bias: polar residues; sequence LDSSSDLTVSIS. The segment covering 658-668 has biased composition (low complexity); that stretch reads SETSFSSSEKS. Positions 678–690 are enriched in polar residues; it reads IQPNYMKSNNMST.

It belongs to the kizuna family.

Its subcellular location is the cytoplasm. It localises to the cytoskeleton. It is found in the microtubule organizing center. The protein resides in the centrosome. The protein localises to the cilium basal body. Centrosomal protein required for establishing a robust mitotic centrosome architecture that can endure the forces that converge on the centrosomes during spindle formation. Required for stabilizing the expanded pericentriolar material around the centriole. The chain is Centrosomal protein kizuna (kiz) from Xenopus laevis (African clawed frog).